The chain runs to 499 residues: Pleckstrin homology domain-containing family O member 2 (499 aa).

Residues 1–11 (MEEEGVKEGGQ) are compositionally biased toward basic and acidic residues. The interval 1–21 (MEEEGVKEGGQRPRSAQTADK) is disordered. Residues 18–119 (TADKAGWIKK…WIKALNEGIN (102 aa)) enclose the PH domain. Serine 167 is modified (phosphoserine). Positions 170–419 (LSRLDLDVPD…RRRQPGEQLH (250 aa)) are disordered. The span at 201–212 (RPPMPPAKPSPA) shows a compositional bias: pro residues. Residues 229–238 (SAPAPVPASS) show a composition bias toward low complexity. Phosphoserine occurs at positions 237 and 238. Positions 246–258 (EDLETPVVEDSDS) are enriched in acidic residues. Position 273 is a phosphoserine (serine 273). Threonine 298 and threonine 311 each carry phosphothreonine. 2 stretches are compositionally biased toward low complexity: residues 329–349 (EASG…GPAE) and 367–386 (AAGP…TLPP). Serine 399 is modified (phosphoserine). Residues 416 to 492 (EQLHRAQLEV…LREKRRELVT (77 aa)) are a coiled coil.

In Bos taurus (Bovine), this protein is Pleckstrin homology domain-containing family O member 2 (PLEKHO2).